A 124-amino-acid chain; its full sequence is Large ribosomal subunit protein bL12 (124 aa).

This sequence belongs to the bacterial ribosomal protein bL12 family. In terms of assembly, homodimer. Part of the ribosomal stalk of the 50S ribosomal subunit. Forms a multimeric L10(L12)X complex, where L10 forms an elongated spine to which 2 to 4 L12 dimers bind in a sequential fashion. Binds GTP-bound translation factors.

Its function is as follows. Forms part of the ribosomal stalk which helps the ribosome interact with GTP-bound translation factors. Is thus essential for accurate translation. The chain is Large ribosomal subunit protein bL12 from Cupriavidus pinatubonensis (strain JMP 134 / LMG 1197) (Cupriavidus necator (strain JMP 134)).